Consider the following 118-residue polypeptide: Non-specific lipid-transfer protein 1 (118 aa).

A signal peptide spans 1 to 25 (MASLRVSCLVALMCMVVISAPMAEA). Cystine bridges form between C29–C76, C39–C53, C54–C99, and C74–C113.

It belongs to the plant LTP family.

In terms of biological role, plant non-specific lipid-transfer proteins transfer phospholipids as well as galactolipids across membranes. May play a role in wax or cutin deposition in the cell walls of expanding epidermal cells and certain secretory tissues. The protein is Non-specific lipid-transfer protein 1 of Lens culinaris (Lentil).